The chain runs to 317 residues: MTTQLDALKQMTVVVADTGDIEAMKLYKPQDATTNPSLILSASALPQYVSLIDDAVAYAKAKSSDKAQQLIDAEDKLAVNIGLEILKLVPGRISTEVDARLSYDIQGTIEKARKIIALYNEAGVANDRILIKVASTWQGIRAAEVLEKEGINCNLTLLFSQAQARACAEAGVYLISPFVGRILDWYKANSDKQEYAPAEDPGVISVTQIYNYYKQYGYKTVVMGASFRNIGEITELAGCDRLTIAPPLLKQLQENEAPLARKLEYKGEVQTRPAPMTEAEFYWEHNADPMAVEKLAEGIRKFAADIEKLEAMLAAKL.

Lys132 (schiff-base intermediate with substrate) is an active-site residue.

It belongs to the transaldolase family. Type 1 subfamily. Homodimer.

It localises to the cytoplasm. It catalyses the reaction D-sedoheptulose 7-phosphate + D-glyceraldehyde 3-phosphate = D-erythrose 4-phosphate + beta-D-fructose 6-phosphate. The protein operates within carbohydrate degradation; pentose phosphate pathway; D-glyceraldehyde 3-phosphate and beta-D-fructose 6-phosphate from D-ribose 5-phosphate and D-xylulose 5-phosphate (non-oxidative stage): step 2/3. Its function is as follows. Transaldolase is important for the balance of metabolites in the pentose-phosphate pathway. This chain is Transaldolase, found in Actinobacillus succinogenes (strain ATCC 55618 / DSM 22257 / CCUG 43843 / 130Z).